The sequence spans 386 residues: Patatin-15 (386 aa).

A signal peptide spans 1–23 (MATTKSFLILFFMILATTSSTCA). In terms of domain architecture, PNPLA spans 32–229 (LSIDGGGIKG…TVGDPALLSL (198 aa)). The GXGXXG motif lies at 36–41 (GGGIKG). The GXSXG signature appears at 75–79 (GTSTG). The Nucleophile role is filled by S77. Residue N115 is glycosylated (N-linked (GlcNAc...) asparagine). Residue D215 is the Proton acceptor of the active site. The DGA/G signature appears at 215–217 (DGG). Residues 321 to 384 (ENALTGTTTE…DRKKLRANKA (64 aa)) are a coiled coil.

This sequence belongs to the patatin family. As to expression, tuber.

The protein resides in the vacuole. Probable lipolytic acyl hydrolase (LAH), an activity which is thought to be involved in the response of tubers to pathogens. The chain is Patatin-15 from Solanum tuberosum (Potato).